Reading from the N-terminus, the 365-residue chain is MMLSLCAIAGLLLAPSIQAERIRDLTTVLGVRENALIGYGLVVGLDGTGDQTTQTPFTTQSLRNMLSQLGVAVPTGTNMQLKNVAAVMVTAKLPAFARAGQKIDVVVSSLGSAKSLRGGTLLMTPLKGVDNQVYALAQGNILVSGSGAQAGGNRVQVNQLNGGRISGGAIVERSVPADFAGGNVIMLQLNNDDFSLAQQISDAINRHFGHRSALPLDSRTINVAVPPDGPGKVRFLASLQNIPITLGPTDAVVVINSRTGSVVMNRDVVLGSCAVAHGELTVEVNRTYKVSQPDTPFGGGRTVVVPETAINVRNEGGALQQIDAGANLNDVVSALNGIGATPNDLMAILQSMQSTGCLNAKLEIN.

An N-terminal signal peptide occupies residues 1–19; the sequence is MMLSLCAIAGLLLAPSIQA.

This sequence belongs to the FlgI family. As to quaternary structure, the basal body constitutes a major portion of the flagellar organelle and consists of four rings (L,P,S, and M) mounted on a central rod.

The protein resides in the periplasm. It is found in the bacterial flagellum basal body. Its function is as follows. Assembles around the rod to form the L-ring and probably protects the motor/basal body from shearing forces during rotation. This Sodalis glossinidius (strain morsitans) protein is Flagellar P-ring protein.